Reading from the N-terminus, the 85-residue chain is Putative sodium channel toxin Ts34 (85 aa).

Positions 1 to 17 are cleaved as a signal peptide; the sequence is MNLPLLLLITILIEIHA. In terms of domain architecture, LCN-type CS-alpha/beta spans 19–82; that stretch reads KDGYVIYKNS…IYGETGSYCW (64 aa). 4 disulfide bridges follow: Cys30–Cys81, Cys34–Cys57, Cys43–Cys62, and Cys47–Cys64.

The protein belongs to the long (4 C-C) scorpion toxin superfamily. Sodium channel inhibitor family. As to expression, expressed by the venom gland.

It localises to the secreted. Its function is as follows. Putative sodium channel toxin. The chain is Putative sodium channel toxin Ts34 from Tityus serrulatus (Brazilian scorpion).